Consider the following 244-residue polypeptide: Lymphotoxin-beta (244 aa).

At 1-18 (MGALGLEGRGGRLQGRGS) the chain is on the cytoplasmic side. The chain crosses the membrane as a helical; Signal-anchor for type II membrane protein span at residues 19-48 (LLLAVAGATSLVTLLLAVPITVLAVLALVP). Residues 49–244 (QDQGGLVTET…KTFFGAVMVG (196 aa)) are Extracellular-facing. The region spanning 88–243 (PAAHLIGAPL…GKTFFGAVMV (156 aa)) is the THD domain. The N-linked (GlcNAc...) asparagine glycan is linked to N222.

The protein belongs to the tumor necrosis factor family. In terms of assembly, heterotrimer of either two LTB and one LTA subunits or (less prevalent) one LTB and two LTA subunits. Spleen and thymus.

The protein resides in the membrane. In terms of biological role, cytokine that binds to LTBR/TNFRSF3. May play a specific role in immune response regulation. Provides the membrane anchor for the attachment of the heterotrimeric complex to the cell surface. Isoform 2 is probably non-functional. This is Lymphotoxin-beta (LTB) from Homo sapiens (Human).